The following is a 441-amino-acid chain: Polyketide methyltransferase ustM (441 aa).

The interval 266-368 is methyltransferase (CMeT) domain; sequence LEVGAGLGGT…VRKLLRGGGF (103 aa).

Belongs to the methyltransferase superfamily.

It participates in secondary metabolite biosynthesis. In terms of biological role, polyketide methyltransferase; part of the gene cluster that mediates the biosynthesis of ustilaginoidins, dimeric gamma-naphthopyrones isolated from different fungal species. The first step in the biosynthesis of ustilaginoidins is the production of gamma-naphthopyrone precursor YWA1 by the non-reducing polyketide synthase ustP, via condensation of one acetyl-CoA starter unit with 6 malonyl-CoA units. YWA1 is then probably substrate of the ustZ to yield norrubrofusarin via a dehydration reaction. A key enzyme in the biosynthetic pathway is the laccase ustL, which catalyzes the oxidative dimerization of norrubrofusarin to ustilaginoidin A. It can produce the M- and P-atropisomers in varying amounts, depending on the reaction conditions. For the biosynthesis of 3-methylustilaginoid in derivatives such as chaetochromin A, a methylated derivative of YWA1 is required. The C-methylation is considered to be catalyzed by ustM, the phosphopantetheine attachment site of which indicates that it acts on the growing polyketide chain before release of the product. For the biosynthesis of chaetochromin A, it is assumed that saturation of the D2 double bond takes place before dimerization, and is probably catalyzed by an external reductase because no candidate gene was identified within the cluster. In Ustilaginoidea virens (Rice false smut fungus), this protein is Polyketide methyltransferase ustM.